Here is an 82-residue protein sequence, read N- to C-terminus: Small ribosomal subunit protein bS16 (82 aa).

This sequence belongs to the bacterial ribosomal protein bS16 family.

In Gloeothece citriformis (strain PCC 7424) (Cyanothece sp. (strain PCC 7424)), this protein is Small ribosomal subunit protein bS16.